Here is a 318-residue protein sequence, read N- to C-terminus: L-malyl-CoA/beta-methylmalyl-CoA lyase (318 aa).

Residues Phe-19, Arg-24, Lys-30, and Arg-76 each contribute to the substrate site. Positions 141 and 168 each coordinate Mg(2+). Substrate contacts are provided by residues 167 to 168 (AD) and 251 to 252 (IH).

The protein belongs to the HpcH/HpaI aldolase family. As to quaternary structure, homohexamer. Dimer of trimers. Mg(2+) is required as a cofactor. Requires Mn(2+) as cofactor.

It carries out the reaction (S)-malyl-CoA = glyoxylate + acetyl-CoA. It catalyses the reaction (2R,3S)-beta-methylmalyl-CoA = propanoyl-CoA + glyoxylate. Functionally, involved in the ethylmalonyl-CoA pathway for acetate assimilation. Catalyzes the reversible condensation of glyoxylate and acetyl-CoA to L-malyl-CoA and the reversible condensation of glyoxylate and propionyl-CoA to yield beta-methylmalyl-CoA. This Cereibacter sphaeroides (strain ATCC 17025 / ATH 2.4.3) (Rhodobacter sphaeroides) protein is L-malyl-CoA/beta-methylmalyl-CoA lyase.